The chain runs to 793 residues: Serine/threonine-protein phosphatase 1 regulatory subunit GAC1 (793 aa).

Positions 1–10 (MVIQTATTLS) are enriched in polar residues. The interval 1–20 (MVIQTATTLSPAKARPSFPH) is disordered. Residues 235 to 360 (TKYLNGQNVK…NNNGKNYHLF (126 aa)) enclose the CBM21 domain. Phosphoserine occurs at positions 415 and 424. 2 disordered regions span residues 450–491 (LENA…SIDL) and 616–671 (TTMD…LNDH). A compositionally biased stretch (polar residues) spans 623 to 633 (KTSTINNSTDT). Positions 637 to 648 (PSKENGTVKENK) are enriched in basic and acidic residues. Residues 649–665 (SSANSTSAPSSSQNRAS) show a composition bias toward low complexity.

Functionally, regulates the activity of glycogen synthase. It is most probably a regulatory subunit for protein phosphatase type 1. This chain is Serine/threonine-protein phosphatase 1 regulatory subunit GAC1 (GAC1), found in Saccharomyces cerevisiae (strain ATCC 204508 / S288c) (Baker's yeast).